The primary structure comprises 338 residues: Lipoyl synthase (338 aa).

The segment at Met1–Lys24 is disordered. [4Fe-4S] cluster-binding residues include Cys84, Cys89, Cys95, Cys110, Cys114, Cys117, and Ser324. In terms of domain architecture, Radical SAM core spans Phe96–Lys313.

It belongs to the radical SAM superfamily. Lipoyl synthase family. It depends on [4Fe-4S] cluster as a cofactor.

Its subcellular location is the cytoplasm. It carries out the reaction [[Fe-S] cluster scaffold protein carrying a second [4Fe-4S](2+) cluster] + N(6)-octanoyl-L-lysyl-[protein] + 2 oxidized [2Fe-2S]-[ferredoxin] + 2 S-adenosyl-L-methionine + 4 H(+) = [[Fe-S] cluster scaffold protein] + N(6)-[(R)-dihydrolipoyl]-L-lysyl-[protein] + 4 Fe(3+) + 2 hydrogen sulfide + 2 5'-deoxyadenosine + 2 L-methionine + 2 reduced [2Fe-2S]-[ferredoxin]. Its pathway is protein modification; protein lipoylation via endogenous pathway; protein N(6)-(lipoyl)lysine from octanoyl-[acyl-carrier-protein]: step 2/2. In terms of biological role, catalyzes the radical-mediated insertion of two sulfur atoms into the C-6 and C-8 positions of the octanoyl moiety bound to the lipoyl domains of lipoate-dependent enzymes, thereby converting the octanoylated domains into lipoylated derivatives. This chain is Lipoyl synthase, found in Pseudomonas putida (strain ATCC 700007 / DSM 6899 / JCM 31910 / BCRC 17059 / LMG 24140 / F1).